We begin with the raw amino-acid sequence, 301 residues long: Homoserine O-acetyltransferase (301 aa).

Residue cysteine 142 is the Acyl-thioester intermediate of the active site. Residues lysine 163 and serine 192 each contribute to the substrate site. The Proton acceptor role is filled by histidine 235. Glutamate 237 is an active-site residue. Arginine 249 contacts substrate.

The protein belongs to the MetA family.

It localises to the cytoplasm. It carries out the reaction L-homoserine + acetyl-CoA = O-acetyl-L-homoserine + CoA. It participates in amino-acid biosynthesis; L-methionine biosynthesis via de novo pathway; O-acetyl-L-homoserine from L-homoserine: step 1/1. Transfers an acetyl group from acetyl-CoA to L-homoserine, forming acetyl-L-homoserine. The protein is Homoserine O-acetyltransferase of Bacillus anthracis (strain A0248).